Reading from the N-terminus, the 155-residue chain is U4/U6.U5 small nuclear ribonucleoprotein 27 kDa protein (155 aa).

Composition is skewed to basic residues over residues 1–31 (MGRS…RERS) and 39–59 (RRSR…RHRS). Positions 1–97 (MGRSRSRSPR…ITEEDLEGKT (97 aa)) are disordered. S61 and S65 each carry phosphoserine. Residues 66–97 (RLKERRDEEKKETKETKSKERQITEEDLEGKT) are compositionally biased toward basic and acidic residues. Phosphoserine is present on residues S111, S114, and S132.

The protein belongs to the SNUT3 family. In terms of assembly, part of a tri-snRNP complex. Post-translationally, phosphorylated in vitro by snRNP-associated protein kinase.

The protein localises to the nucleus. Functionally, may play a role in mRNA splicing. This chain is U4/U6.U5 small nuclear ribonucleoprotein 27 kDa protein (SNRNP27), found in Homo sapiens (Human).